A 642-amino-acid polypeptide reads, in one-letter code: Threonine--tRNA ligase (642 aa).

The region spanning 1 to 61 is the TGS domain; the sequence is MPIITLPDGS…EEDASLEIIT (61 aa). The segment at 244–535 is catalytic; it reads DHRKIGKQLD…LIEEYAGFFP (292 aa). The Zn(2+) site is built by Cys-335, His-386, and His-512.

It belongs to the class-II aminoacyl-tRNA synthetase family. In terms of assembly, homodimer. The cofactor is Zn(2+).

The protein resides in the cytoplasm. It carries out the reaction tRNA(Thr) + L-threonine + ATP = L-threonyl-tRNA(Thr) + AMP + diphosphate + H(+). Functionally, catalyzes the attachment of threonine to tRNA(Thr) in a two-step reaction: L-threonine is first activated by ATP to form Thr-AMP and then transferred to the acceptor end of tRNA(Thr). Also edits incorrectly charged L-seryl-tRNA(Thr). This chain is Threonine--tRNA ligase, found in Vibrio parahaemolyticus serotype O3:K6 (strain RIMD 2210633).